Consider the following 364-residue polypeptide: tRNA 2-selenouridine synthase (364 aa).

One can recognise a Rhodanese domain in the interval 14-137; that stretch reads LLADTPLIDV…LRQTAIQATW (124 aa). The active-site S-selanylcysteine intermediate is cysteine 97.

This sequence belongs to the SelU family. In terms of assembly, monomer.

The catalysed reaction is 5-methylaminomethyl-2-thiouridine(34) in tRNA + selenophosphate + (2E)-geranyl diphosphate + H2O + H(+) = 5-methylaminomethyl-2-selenouridine(34) in tRNA + (2E)-thiogeraniol + phosphate + diphosphate. It catalyses the reaction 5-methylaminomethyl-2-thiouridine(34) in tRNA + (2E)-geranyl diphosphate = 5-methylaminomethyl-S-(2E)-geranyl-thiouridine(34) in tRNA + diphosphate. The enzyme catalyses 5-methylaminomethyl-S-(2E)-geranyl-thiouridine(34) in tRNA + selenophosphate + H(+) = 5-methylaminomethyl-2-(Se-phospho)selenouridine(34) in tRNA + (2E)-thiogeraniol. It carries out the reaction 5-methylaminomethyl-2-(Se-phospho)selenouridine(34) in tRNA + H2O = 5-methylaminomethyl-2-selenouridine(34) in tRNA + phosphate. Involved in the post-transcriptional modification of the uridine at the wobble position (U34) of tRNA(Lys), tRNA(Glu) and tRNA(Gln). Catalyzes the conversion of 2-thiouridine (S2U-RNA) to 2-selenouridine (Se2U-RNA). Acts in a two-step process involving geranylation of 2-thiouridine (S2U) to S-geranyl-2-thiouridine (geS2U) and subsequent selenation of the latter derivative to 2-selenouridine (Se2U) in the tRNA chain. In Salmonella paratyphi A (strain ATCC 9150 / SARB42), this protein is tRNA 2-selenouridine synthase.